Reading from the N-terminus, the 312-residue chain is MASFSEEAMDSYMYPAYNPYSYRYMTPKNKGMSWRQKNYLASYGDTGDYYDNYQRAQLKAILSQVNPNLTPRLRKANTRDVGVQVNPRQDASVQCSLGPRTLLRRRPGALRKPQQSPPEQGSPASPTKTVRFPRTIAVYSPVAAGRLAPFQDKGENLSEKTEALRSEGSRGEGGRPEGKQEDGEIKEQTKMDKADQEEVAPDQTRPKFQFLEQKYGYYHCKDCNIRWESAYVWCVQGTNKVYFKQFCRTCQKSYNPYRVEDIMCQSCKQTRCMCPVKLRHVDPKRPHRQDLCGRCKGKRLSCDSTFSFKYII.

Disordered stretches follow at residues 79–133 (RDVG…VRFP) and 150–205 (FQDK…DQTR). Polar residues-rich tracts occupy residues 86-95 (NPRQDASVQC) and 113-128 (PQQSPPEQGSPASPTK). The segment covering 152 to 196 (DKGENLSEKTEALRSEGSRGEGGRPEGKQEDGEIKEQTKMDKADQ) has biased composition (basic and acidic residues). The 3CxxC-type zinc-finger motif lies at 214–297 (KYGYYHCKDC…RQDLCGRCKG (84 aa)).

The protein belongs to the ZAR1 family. As to expression, ovary.

It localises to the cytoplasm. The protein localises to the cytoplasmic ribonucleoprotein granule. Functionally, mRNA-binding protein required for maternal mRNA storage, translation and degradation during oocyte maturation. Probably promotes formation of some phase-separated membraneless compartment that stores maternal mRNAs in oocytes: acts by undergoing liquid-liquid phase separation upon binding to maternal mRNAs. Binds to the 3'-UTR of maternal mRNAs in immature oocytes, inhibiting their translation. This chain is Zygote arrest protein 1.L, found in Xenopus laevis (African clawed frog).